We begin with the raw amino-acid sequence, 131 residues long: C-glycoside deglycosidase beta subunit (131 aa).

Belongs to the C-glycoside deglycosidase beta subunit family. Heterodimer composed of an alpha subunit (CarB1) and a beta subunit (CarC1). It depends on Mg(2+) as a cofactor.

It carries out the reaction 3''-dehydroisovitexin = 1,5-anhydro-D-erythro-hex-1-en-3-ulose + apigenin. With respect to regulation, activity is strongly reduced in the presence of chelating agents. Functionally, carbon-carbon bond-cleaving enzyme which participates in the metabolism of C-glycosides. Acts on the C6-glycosylated compound 3''-dehydroisovitexin (3''-oxo-isovitexin). Shows weak activity with 3''-dehydroisoorientin (3''-oxo-homoorientin) and 3'-dehydromangiferin (3'-oxo-mangiferin). This Arthrobacter globiformis (strain ATCC 8010 / DSM 20124 / JCM 1332 / NBRC 12137 / NCIMB 8907 / NRRL B-2979 / 168) protein is C-glycoside deglycosidase beta subunit.